The primary structure comprises 280 residues: Fructose-1,6-bisphosphatase/inositol-1-monophosphatase (280 aa).

Positions 73, 94, 96, and 97 each coordinate Mg(2+). Residues 97–99 (DGT), R195, V200, and R219 each bind substrate. Mg(2+) is bound at residue D226.

The protein belongs to the inositol monophosphatase superfamily. FBPase class 4 family. Mg(2+) serves as cofactor.

It catalyses the reaction beta-D-fructose 1,6-bisphosphate + H2O = beta-D-fructose 6-phosphate + phosphate. The catalysed reaction is a myo-inositol phosphate + H2O = myo-inositol + phosphate. Its function is as follows. Phosphatase with broad specificity; it can dephosphorylate fructose 1,6-bisphosphate, and both D and L isomers of inositol-1-phosphate (I-1-P). In Methanothermobacter thermautotrophicus (strain ATCC 29096 / DSM 1053 / JCM 10044 / NBRC 100330 / Delta H) (Methanobacterium thermoautotrophicum), this protein is Fructose-1,6-bisphosphatase/inositol-1-monophosphatase (suhB).